Consider the following 143-residue polypeptide: Small ribosomal subunit protein uS9 (143 aa).

Residues aspartate 118–arginine 143 are disordered. Over residues proline 127–arginine 143 the composition is skewed to basic residues.

Belongs to the universal ribosomal protein uS9 family.

This chain is Small ribosomal subunit protein uS9, found in Thermococcus sibiricus (strain DSM 12597 / MM 739).